A 435-amino-acid chain; its full sequence is Glutamyl-tRNA reductase (435 aa).

Substrate contacts are provided by residues T49 to R52, S109, E114 to Q116, and Q120. Catalysis depends on C50, which acts as the Nucleophile. G189–S194 is an NADP(+) binding site.

It belongs to the glutamyl-tRNA reductase family. Homodimer.

It catalyses the reaction (S)-4-amino-5-oxopentanoate + tRNA(Glu) + NADP(+) = L-glutamyl-tRNA(Glu) + NADPH + H(+). It functions in the pathway porphyrin-containing compound metabolism; protoporphyrin-IX biosynthesis; 5-aminolevulinate from L-glutamyl-tRNA(Glu): step 1/2. In terms of biological role, catalyzes the NADPH-dependent reduction of glutamyl-tRNA(Glu) to glutamate 1-semialdehyde (GSA). The chain is Glutamyl-tRNA reductase from Listeria monocytogenes serotype 4a (strain HCC23).